The sequence spans 220 residues: Probable septum site-determining protein MinC (220 aa).

This sequence belongs to the MinC family. In terms of assembly, interacts with MinD and FtsZ.

Its function is as follows. Cell division inhibitor that blocks the formation of polar Z ring septums. Rapidly oscillates between the poles of the cell to destabilize FtsZ filaments that have formed before they mature into polar Z rings. Prevents FtsZ polymerization. In Prochlorococcus marinus subsp. pastoris (strain CCMP1986 / NIES-2087 / MED4), this protein is Probable septum site-determining protein MinC.